Consider the following 453-residue polypeptide: Secreted exoenzyme S (453 aa).

Residues 96–229 (SSAVVFKQMV…LRQAVESEVS (134 aa)) enclose the Bacterial Rho-GAP domain. A TR mART core domain is found at 239–414 (DGLVKRFGAD…RVLEEAALGE (176 aa)). Residues arginine 319, serine 343, and glutamate 381 contribute to the active site.

It is found in the secreted. It carries out the reaction L-arginyl-[protein] + NAD(+) = N(omega)-(ADP-D-ribosyl)-L-arginyl-[protein] + nicotinamide + H(+). Its function is as follows. Bifunctional effector protein that is secreted and delivered by the type III secretion system into eukaryotic target cells. ADP-ribosylates several eukaryotic proteins including ezrin/radixin/moesin (ERM), cyclophilin A and several members of the Ras superfamily. Host Ras ADP-ribosylation blocks its activation by its guanine nucleotide exchange factor, thereby interfering with Ras-mediated signal transduction. For instance, prevents Ras from interacting with and activating phosphoinositol-3-kinase (PI3K), which is required to stimulate the phagocytic NADPH-oxidase that generates reactive oxygen species. The TR mART core domain also contributes to bacterial dissemination to the blood during pneumonia. In addition to this activity, acts via its N-terminal region as a GTPase-activating protein (GAP) for host Rho GTPases including RhoA, Rac1, Cdc42 and Ras. The bacterial Rho-GAP domain activity induces mitochondrial disruption in the target host cell by activating host caspases 3 and 9 that execute cellular death. The polypeptide is Secreted exoenzyme S (exoS) (Pseudomonas aeruginosa (strain ATCC 15692 / DSM 22644 / CIP 104116 / JCM 14847 / LMG 12228 / 1C / PRS 101 / PAO1)).